A 228-amino-acid chain; its full sequence is UPF0758 protein RALTA_A2508 (228 aa).

The MPN domain occupies 102 to 224; the sequence is GFDSPDSVRS…IRSLAESCER (123 aa). Positions 173, 175, and 186 each coordinate Zn(2+). The short motif at 173–186 is the JAMM motif element; it reads HNHPRGTTAPSQSD.

It belongs to the UPF0758 family.

This chain is UPF0758 protein RALTA_A2508, found in Cupriavidus taiwanensis (strain DSM 17343 / BCRC 17206 / CCUG 44338 / CIP 107171 / LMG 19424 / R1) (Ralstonia taiwanensis (strain LMG 19424)).